We begin with the raw amino-acid sequence, 182 residues long: Glutamyl-tRNA(Gln) amidotransferase subunit F, mitochondrial (182 aa).

This sequence belongs to the GatF family. In terms of assembly, subunit of the heterotrimeric GatFAB amidotransferase (AdT) complex, composed of A, B and F subunits.

The protein resides in the mitochondrion inner membrane. It catalyses the reaction L-glutamyl-tRNA(Gln) + L-glutamine + ATP + H2O = L-glutaminyl-tRNA(Gln) + L-glutamate + ADP + phosphate + H(+). Functionally, allows the formation of correctly charged Gln-tRNA(Gln) through the transamidation of misacylated Glu-tRNA(Gln) in the mitochondria. The reaction takes place in the presence of glutamine and ATP through an activated gamma-phospho-Glu-tRNA(Gln). Required for proper protein synthesis within the mitochondrion. The protein is Glutamyl-tRNA(Gln) amidotransferase subunit F, mitochondrial of Candida tropicalis (strain ATCC MYA-3404 / T1) (Yeast).